A 284-amino-acid polypeptide reads, in one-letter code: NAD kinase (284 aa).

Aspartate 65 acts as the Proton acceptor in catalysis. NAD(+) is bound by residues 65–66, 139–140, arginine 150, arginine 167, aspartate 169, and glutamine 239; these read DG and ND.

This sequence belongs to the NAD kinase family. A divalent metal cation serves as cofactor.

It localises to the cytoplasm. The catalysed reaction is NAD(+) + ATP = ADP + NADP(+) + H(+). In terms of biological role, involved in the regulation of the intracellular balance of NAD and NADP, and is a key enzyme in the biosynthesis of NADP. Catalyzes specifically the phosphorylation on 2'-hydroxyl of the adenosine moiety of NAD to yield NADP. The polypeptide is NAD kinase (Desulfatibacillum aliphaticivorans).